A 1404-amino-acid polypeptide reads, in one-letter code: DNA-directed RNA polymerase subunit beta' (1404 aa).

Cysteine 72, cysteine 74, cysteine 87, and cysteine 90 together coordinate Zn(2+). Mg(2+) is bound by residues aspartate 462, aspartate 464, and aspartate 466. The Zn(2+) site is built by cysteine 816, cysteine 890, cysteine 897, and cysteine 900.

Belongs to the RNA polymerase beta' chain family. In terms of assembly, the RNAP catalytic core consists of 2 alpha, 1 beta, 1 beta' and 1 omega subunit. When a sigma factor is associated with the core the holoenzyme is formed, which can initiate transcription. The cofactor is Mg(2+). Zn(2+) serves as cofactor.

It catalyses the reaction RNA(n) + a ribonucleoside 5'-triphosphate = RNA(n+1) + diphosphate. Its function is as follows. DNA-dependent RNA polymerase catalyzes the transcription of DNA into RNA using the four ribonucleoside triphosphates as substrates. In Azoarcus sp. (strain BH72), this protein is DNA-directed RNA polymerase subunit beta'.